The chain runs to 792 residues: G-type lectin S-receptor-like serine/threonine-protein kinase At1g61440 (792 aa).

The signal sequence occupies residues 1-17; that stretch reads MGKKRIVLLLFISFSYA. The 120-residue stretch at 18 to 137 folds into the Bulb-type lectin domain; the sequence is EITKESPLSI…VTGRTLWESF (120 aa). The Extracellular portion of the chain corresponds to 18–419; the sequence is EITKESPLSI…ELDVHKRKMT (402 aa). Residues Asn-46, Asn-127, and Asn-229 are each glycosylated (N-linked (GlcNAc...) asparagine). The region spanning 271-307 is the EGF-like; atypical domain; it reads PANSCDIYGVCGPFGFCVISDPPKCKCFKGFVPKSIE. 2 disulfides stabilise this stretch: Cys-275–Cys-287 and Cys-281–Cys-295. Asn-313, Asn-329, and Asn-368 each carry an N-linked (GlcNAc...) asparagine glycan. The PAN domain maps to 326 to 408; that stretch reads CQGNSTGKDA…GEILSIRLAH (83 aa). Cystine bridges form between Cys-361/Cys-382 and Cys-365/Cys-371. A helical membrane pass occupies residues 420-440; that stretch reads IVASTVSLTLFVILGFATFGF. Residues 441–792 are Cytoplasmic-facing; sequence WRNRVKHHDA…EMTESVILGR (352 aa). The 286-residue stretch at 478–763 folds into the Protein kinase domain; it reads FSLSNKLGHG…DLPLPKQPTF (286 aa). Residues 484 to 492 and Lys-506 contribute to the ATP site; that span reads LGHGGFGSV. Ser-512 and Ser-527 each carry phosphoserine. Positions 567 to 584 are caM-binding; sequence RKRLELDWPKRFDIIQGI. Asp-603 (proton acceptor) is an active-site residue. 2 positions are modified to phosphoserine: Ser-607 and Ser-620. Position 637 is a phosphothreonine (Thr-637). Phosphoserine occurs at positions 680 and 774.

The protein belongs to the protein kinase superfamily. Ser/Thr protein kinase family.

The protein localises to the cell membrane. The enzyme catalyses L-seryl-[protein] + ATP = O-phospho-L-seryl-[protein] + ADP + H(+). It catalyses the reaction L-threonyl-[protein] + ATP = O-phospho-L-threonyl-[protein] + ADP + H(+). The chain is G-type lectin S-receptor-like serine/threonine-protein kinase At1g61440 from Arabidopsis thaliana (Mouse-ear cress).